A 195-amino-acid chain; its full sequence is Guanylate kinase (195 aa).

The 179-residue stretch at 5-183 (GILFVISGPS…ALQKITAIII (179 aa)) folds into the Guanylate kinase-like domain. Position 12-19 (12-19 (GPSGVGKG)) interacts with ATP.

This sequence belongs to the guanylate kinase family.

Its subcellular location is the cytoplasm. It catalyses the reaction GMP + ATP = GDP + ADP. Functionally, essential for recycling GMP and indirectly, cGMP. The protein is Guanylate kinase of Syntrophomonas wolfei subsp. wolfei (strain DSM 2245B / Goettingen).